The sequence spans 362 residues: NAD(P)H-quinone oxidoreductase subunit 1, chloroplastic (362 aa).

The next 8 membrane-spanning stretches (helical) occupy residues 29-49, 103-123, 128-148, 164-184, 202-222, 247-267, 303-323, and 335-355; these read ILPILTLLLGITIEVLVIVWL, IAVISVLLSFLVIPLGYHFVL, IGVFLWIAISSIAPIGLLMAG, AAQSISYEIPLTFCVLAISLL, FFGWNIWRQPIGFLVFLISSL, YSGIKYGLFYLVSYLNLLVSS, TMGIFITLTKAYLFLFISITI, and LLNLGWKFLLPISLGNLLLTT.

This sequence belongs to the complex I subunit 1 family. As to quaternary structure, NDH is composed of at least 16 different subunits, 5 of which are encoded in the nucleus.

Its subcellular location is the plastid. It is found in the chloroplast thylakoid membrane. The enzyme catalyses a plastoquinone + NADH + (n+1) H(+)(in) = a plastoquinol + NAD(+) + n H(+)(out). It catalyses the reaction a plastoquinone + NADPH + (n+1) H(+)(in) = a plastoquinol + NADP(+) + n H(+)(out). In terms of biological role, NDH shuttles electrons from NAD(P)H:plastoquinone, via FMN and iron-sulfur (Fe-S) centers, to quinones in the photosynthetic chain and possibly in a chloroplast respiratory chain. The immediate electron acceptor for the enzyme in this species is believed to be plastoquinone. Couples the redox reaction to proton translocation, and thus conserves the redox energy in a proton gradient. This chain is NAD(P)H-quinone oxidoreductase subunit 1, chloroplastic, found in Triticum aestivum (Wheat).